The sequence spans 424 residues: UPF0229 protein PputGB1_0427 (424 aa).

A disordered region spans residues Glu-81–Ser-107. The span at Gln-92–Ser-107 shows a compositional bias: gly residues.

It belongs to the UPF0229 family.

This chain is UPF0229 protein PputGB1_0427, found in Pseudomonas putida (strain GB-1).